A 195-amino-acid polypeptide reads, in one-letter code: MRQADITRKTAETAISVKVDLDGTGRYDIRTGVGFFDHMMDQLARHSLIDITLRCEGDLHIDDHHTVEDCGIALGQALTQALGDKRGIRRYGSFHLAMDDALVRCALDLSGRPYLVCNLPFPAAKIGSFDTELVREFFQALSTHGGITLHLDLIHGLNGHHIAEAAFKAVARSLREAVEPDPRAASAIPSTKGML.

It belongs to the imidazoleglycerol-phosphate dehydratase family.

The protein localises to the cytoplasm. The catalysed reaction is D-erythro-1-(imidazol-4-yl)glycerol 3-phosphate = 3-(imidazol-4-yl)-2-oxopropyl phosphate + H2O. The protein operates within amino-acid biosynthesis; L-histidine biosynthesis; L-histidine from 5-phospho-alpha-D-ribose 1-diphosphate: step 6/9. This is Imidazoleglycerol-phosphate dehydratase from Cereibacter sphaeroides (strain ATCC 17025 / ATH 2.4.3) (Rhodobacter sphaeroides).